Here is a 559-residue protein sequence, read N- to C-terminus: Dihydroxy-acid dehydratase (559 aa).

Aspartate 78 is a binding site for Mg(2+). Cysteine 119 contributes to the [2Fe-2S] cluster binding site. Mg(2+) is bound by residues aspartate 120 and lysine 121. Lysine 121 is modified (N6-carboxylysine). Cysteine 191 serves as a coordination point for [2Fe-2S] cluster. Glutamate 442 is a Mg(2+) binding site. Serine 468 acts as the Proton acceptor in catalysis.

The protein belongs to the IlvD/Edd family. As to quaternary structure, homodimer. [2Fe-2S] cluster serves as cofactor. Mg(2+) is required as a cofactor.

It catalyses the reaction (2R)-2,3-dihydroxy-3-methylbutanoate = 3-methyl-2-oxobutanoate + H2O. It carries out the reaction (2R,3R)-2,3-dihydroxy-3-methylpentanoate = (S)-3-methyl-2-oxopentanoate + H2O. Its pathway is amino-acid biosynthesis; L-isoleucine biosynthesis; L-isoleucine from 2-oxobutanoate: step 3/4. It functions in the pathway amino-acid biosynthesis; L-valine biosynthesis; L-valine from pyruvate: step 3/4. Functionally, functions in the biosynthesis of branched-chain amino acids. Catalyzes the dehydration of (2R,3R)-2,3-dihydroxy-3-methylpentanoate (2,3-dihydroxy-3-methylvalerate) into 2-oxo-3-methylpentanoate (2-oxo-3-methylvalerate) and of (2R)-2,3-dihydroxy-3-methylbutanoate (2,3-dihydroxyisovalerate) into 2-oxo-3-methylbutanoate (2-oxoisovalerate), the penultimate precursor to L-isoleucine and L-valine, respectively. This chain is Dihydroxy-acid dehydratase, found in Agathobacter rectalis (strain ATCC 33656 / DSM 3377 / JCM 17463 / KCTC 5835 / VPI 0990) (Eubacterium rectale).